Reading from the N-terminus, the 340-residue chain is Sulfotransferase 2B1 (340 aa).

67-72 (KSGTNW) contacts 3'-phosphoadenylyl sulfate. The substrate site is built by W95 and W100. H122 acts as the Proton acceptor in catalysis. Residues R144, S152, Y207, 241 to 246 (SAFAAM), and 271 to 273 (RKG) each bind 3'-phosphoadenylyl sulfate. Residues 301 to 340 (LPSFPWDRSAEDGSPDGETEPSPSPSPGLASDDPNPGSSQ) are disordered.

This sequence belongs to the sulfotransferase 1 family. Isoform 1 is expressed in skin and testis. Higher level of isoform 2 expressed in skin and intestine, moderate level in the kidney, low level in liver, stomach and placenta.

It localises to the cytoplasm. It is found in the cytosol. The protein localises to the microsome. The protein resides in the nucleus. It catalyses the reaction an alcohol + 3'-phosphoadenylyl sulfate = an alkyl sulfate + adenosine 3',5'-bisphosphate + H(+). It carries out the reaction pregnenolone + 3'-phosphoadenylyl sulfate = pregnenolone sulfate + adenosine 3',5'-bisphosphate + H(+). The enzyme catalyses 3beta-hydroxyandrost-5-en-17-one + 3'-phosphoadenylyl sulfate = dehydroepiandrosterone 3-sulfate + adenosine 3',5'-bisphosphate + H(+). The catalysed reaction is cholesterol + 3'-phosphoadenylyl sulfate = cholesterol sulfate + adenosine 3',5'-bisphosphate + H(+). Its function is as follows. Sulfotransferase that utilizes 3'-phospho-5'-adenylyl sulfate (PAPS) as sulfonate donor to catalyze the sulfate conjugation. Sulfonation increases the water solubility of most compounds, and therefore their renal excretion, but it can also result in bioactivation to form active metabolites. Sulfonates cholesterol. Catalyzes sulfation of the 3beta-hydroxyl groups of steroids, such as, pregnenolone and dehydroepiandrosterone (DHEA). Conjugates efficiently cholesterol but has a greater affinity for pregnenolone sulfation. Does not show high activity with DHEA. Plays a role in epidermal cholesterol metabolism and in the regulation of epidermal proliferation and differentiation. Prefers pregnenolone over DHEA as a substrate and does not sulfate cholesterol. The polypeptide is Sulfotransferase 2B1 (Rattus norvegicus (Rat)).